We begin with the raw amino-acid sequence, 739 residues long: Polyribonucleotide nucleotidyltransferase (739 aa).

Positions 489 and 495 each coordinate Mg(2+). The KH domain occupies P556–I615. Positions D625–K693 constitute an S1 motif domain. A disordered region spans residues P699–K739. Basic and acidic residues predominate over residues E722 to K739.

This sequence belongs to the polyribonucleotide nucleotidyltransferase family. It depends on Mg(2+) as a cofactor.

It localises to the cytoplasm. The enzyme catalyses RNA(n+1) + phosphate = RNA(n) + a ribonucleoside 5'-diphosphate. Its function is as follows. Involved in mRNA degradation. Catalyzes the phosphorolysis of single-stranded polyribonucleotides processively in the 3'- to 5'-direction. The chain is Polyribonucleotide nucleotidyltransferase from Streptococcus suis (strain 98HAH33).